The primary structure comprises 291 residues: Undecaprenyl-diphosphatase (291 aa).

The next 8 helical transmembrane spans lie at 1-21 (MLILELIKGIILGIVEGLTEF), 48-68 (SAFTFKIVIQLGSVFAGAWVF), 99-119 (LHIIVGMIPAGVLGLLFDDVI), 123-143 (LFSVPTVMIGLFIGAIYMIIA), 159-179 (INYFQAFVIGLSQAIAMWPGF), 200-220 (SDFTFIMAVPVMLAASGLSLV), 236-256 (LGFLAAFIVGLIAIKTFLYLI), and 269-289 (IVLVIIIAILYFGFGIGQGIT).

This sequence belongs to the UppP family.

The protein localises to the cell membrane. It carries out the reaction di-trans,octa-cis-undecaprenyl diphosphate + H2O = di-trans,octa-cis-undecaprenyl phosphate + phosphate + H(+). Its function is as follows. Catalyzes the dephosphorylation of undecaprenyl diphosphate (UPP). Confers resistance to bacitracin. This chain is Undecaprenyl-diphosphatase, found in Staphylococcus saprophyticus subsp. saprophyticus (strain ATCC 15305 / DSM 20229 / NCIMB 8711 / NCTC 7292 / S-41).